Here is a 298-residue protein sequence, read N- to C-terminus: Olfactory receptor 5AK3 (298 aa).

Topologically, residues 1–25 are extracellular; the sequence is MGRGNSTEVTEFHLLGFGVQHEFQH. N5 is a glycosylation site (N-linked (GlcNAc...) asparagine). A helical membrane pass occupies residues 26-46; it reads VLFIVLLLIYVTSLIGNIGMI. The Cytoplasmic portion of the chain corresponds to 47-54; that stretch reads LLIKTDSR. A helical transmembrane segment spans residues 55–75; sequence LQTPMYFFPQHLAFVDICYTS. Residues 76-99 lie on the Extracellular side of the membrane; that stretch reads AITPKMLQSFTEENNLITFRGCVI. C97 and C189 are joined by a disulfide. A helical transmembrane segment spans residues 100–120; the sequence is QFLVYATFATSDCYLLAIMAM. Residues 121-133 lie on the Cytoplasmic side of the membrane; the sequence is DCYVAICKPLRYP. Residues 134–154 traverse the membrane as a helical segment; that stretch reads MIMSQTVYIQLVAGSYIIGSI. N155 is a glycosylation site (N-linked (GlcNAc...) asparagine). Topologically, residues 155-196 are extracellular; that stretch reads NASVHTGFTFSLSFCKSNKINHFFCDGLPILALSCSNIDINI. Residues 197-217 form a helical membrane-spanning segment; that stretch reads ILDVVFVGFDLMFTELVIIFS. The Cytoplasmic segment spans residues 218 to 237; the sequence is YIYIMVTILKMSSTAGRKKS. Residues 238 to 258 traverse the membrane as a helical segment; the sequence is FSTCASHLTAVTIFYGTLSYM. Over 259 to 271 the chain is Extracellular; that stretch reads YLQPQSNNSQENM. N-linked (GlcNAc...) asparagine glycosylation occurs at N265. Residues 272–292 form a helical membrane-spanning segment; sequence KVASIFYGTVIPMLNPLIYSL. The Cytoplasmic segment spans residues 293–298; sequence RNKEGK.

It belongs to the G-protein coupled receptor 1 family.

Its subcellular location is the cell membrane. In terms of biological role, odorant receptor. The protein is Olfactory receptor 5AK3 (OR5AK3P) of Homo sapiens (Human).